The primary structure comprises 181 residues: CASP-like protein UU-1 (181 aa).

Residues 1 to 30 (MTMELESQEVVVETTTAAAAARAASAAHVR) are Cytoplasmic-facing. Residues 31–51 (TTVALRLLAFAASLAAAVVVA) form a helical membrane-spanning segment. Residues 52-65 (TNRQERWGITVTFK) are Extracellular-facing. A helical membrane pass occupies residues 66–86 (MFAVWEAFVAINFACAAYALL). The Cytoplasmic segment spans residues 87 to 107 (TAVFVKKLVSKHWLHHMDQFT). The helical transmembrane segment at 108 to 128 (VNLQAASTAGAGAVGSVAMWG) threads the bilayer. Residues 129 to 147 (NEPSGWYAVCRLYRLYCDR) are Extracellular-facing. The helical transmembrane segment at 148–168 (GAVSLALAFVAFVAFGVASSL) threads the bilayer. The Cytoplasmic portion of the chain corresponds to 169-181 (SRYPRAPPPPAPR).

Belongs to the Casparian strip membrane proteins (CASP) family. As to quaternary structure, homodimer and heterodimers.

It is found in the cell membrane. The sequence is that of CASP-like protein UU-1 from Sorghum bicolor (Sorghum).